The primary structure comprises 1041 residues: Cullin-associated NEDD8-dissociated protein 1, C-terminal part (1041 aa).

Disordered stretches follow at residues 1-24 (MSSD…ELRE) and 64-103 (DMGE…EGGY). Over residues 9-24 (YSHDDEHDPQTDELRE) the composition is skewed to basic and acidic residues. Positions 65–103 (MGEDEEMSGTQDDGSEDDVTEEPDLEDDDFEDFEEEGGY) are enriched in acidic residues. The stretch at 138-176 (SLYQQIAPAIVARFNKEREESVKLELVSTMDALVRKTAE) is one HEAT 1 repeat. The segment at 189–237 (SVGSGSKISRKRRRQDSDASMIDFEPSMGTSSAAGTPLAAPSSPQSGPQ) is disordered. Low complexity predominate over residues 225–237 (PLAAPSSPQSGPQ). HEAT repeat units follow at residues 242–279 (NALP…VRYG), 339–376 (PFLI…ALTP), 434–472 (LSFE…LCSR), 479–516 (NWVR…NPNT), 525–560 (MKNL…GNAQ), 598–637 (GSGL…NVGV), 670–708 (GASC…GNVK), 710–744 (YLPT…MVRR), 780–817 (LDPP…DSRD), and 822–867 (VLRP…HLGE).

The protein belongs to the CAND family. Interacts with candA-N. Interacts with unneddylated cullins culA and culD.

The protein localises to the nucleus. Assembly factor of SCF (SKP1-CUL1-F-box protein) E3 ubiquitin ligase complexes that promotes the exchange of the substrate-recognition F-box subunit in SCF complexes, thereby playing a key role in the cellular repertoire of SCF complexes. Acts as a F-box protein exchange factor when interacting with candA-N. This is Cullin-associated NEDD8-dissociated protein 1, C-terminal part (candA-C) from Emericella nidulans (strain FGSC A4 / ATCC 38163 / CBS 112.46 / NRRL 194 / M139) (Aspergillus nidulans).